The chain runs to 634 residues: Dachshund homolog 2 (634 aa).

The interval 76–162 is DACHbox-N; the sequence is RMVDMHGVKV…LITRKDFETL (87 aa). 3 disordered regions span residues 171–194, 244–286, and 378–416; these read RKRQ…KRSL, LQGN…SGPQ, and IPES…MDHH. Residues 244-269 are compositionally biased toward polar residues; sequence LQGNGSQNGTESEPDDLNSTTGGSES. Positions 396 to 412 are enriched in low complexity; that stretch reads SQTSSHPSSSVSSSPSQ. A DACHbox-C region spans residues 488 to 568; the sequence is SSVETLLTNI…KAKRKLQEAL (81 aa). A coiled-coil region spans residues 494-588; sequence LTNIQGLLKV…EQALKQATSG (95 aa).

Belongs to the DACH/dachshund family. In terms of assembly, interacts with SIX6. Interacts with EYA2. Expressed in embryo, and at lower levels in the newborn.

It is found in the nucleus. Functionally, transcription factor that is involved in regulation of organogenesis. Seems to be a regulator for SIX1 and SIX6. Seems to act as a corepressor of SIX6 in regulating proliferation by directly repressing cyclin-dependent kinase inhibitors, including the p27Kip1 promoter. Is recruited with SIX6 to the p27Kip1 promoter in embryonal retina. SIX6 corepression also seems to involve NCOR1, TBL1, HDAC1 and HDAC3. May be involved together with PAX3, SIX1, and EYA2 in regulation of myogenesis. In the developing somite, expression of DACH2 and PAX3 is regulated by the overlying ectoderm, and DACH2 and PAX3 positively regulate each other's expression. Probably binds to DNA via its DACHbox-N domain. The polypeptide is Dachshund homolog 2 (Dach2) (Mus musculus (Mouse)).